We begin with the raw amino-acid sequence, 530 residues long: AAA-ATPase At3g28510 (530 aa).

Residues 5–25 form a helical membrane-spanning segment; that stretch reads GAIWGITGTTVTSFMFFWAIY. Position 250–257 (250–257) interacts with ATP; it reads GPPGTGKS. 2 disordered regions span residues 312–339 and 463–530; these read QRKK…KVDD and KARK…KSDS. 2 stretches are compositionally biased toward basic and acidic residues: residues 326–339 and 463–511; these read EEKK…KVDD and KARK…KEEN. Over residues 512 to 523 the composition is skewed to polar residues; the sequence is GNVSQQNGNSID.

This sequence belongs to the AAA ATPase family. BCS1 subfamily. It depends on Mg(2+) as a cofactor.

The protein resides in the membrane. It catalyses the reaction ATP + H2O = ADP + phosphate + H(+). This is AAA-ATPase At3g28510 from Arabidopsis thaliana (Mouse-ear cress).